A 347-amino-acid polypeptide reads, in one-letter code: Quinolinate synthase (347 aa).

2 residues coordinate iminosuccinate: His-47 and Ser-68. A [4Fe-4S] cluster-binding site is contributed by Cys-113. Residues 139-141 and Ser-156 each bind iminosuccinate; that span reads YAN. Cys-200 lines the [4Fe-4S] cluster pocket. Iminosuccinate is bound by residues 226-228 and Thr-243; that span reads HPE. [4Fe-4S] cluster is bound at residue Cys-297.

Belongs to the quinolinate synthase family. Type 1 subfamily. The cofactor is [4Fe-4S] cluster.

The protein localises to the cytoplasm. It catalyses the reaction iminosuccinate + dihydroxyacetone phosphate = quinolinate + phosphate + 2 H2O + H(+). Its pathway is cofactor biosynthesis; NAD(+) biosynthesis; quinolinate from iminoaspartate: step 1/1. In terms of biological role, catalyzes the condensation of iminoaspartate with dihydroxyacetone phosphate to form quinolinate. The sequence is that of Quinolinate synthase from Salmonella typhi.